We begin with the raw amino-acid sequence, 96 residues long: Putative pterin-4-alpha-carbinolamine dehydratase (96 aa).

The protein belongs to the pterin-4-alpha-carbinolamine dehydratase family.

The catalysed reaction is (4aS,6R)-4a-hydroxy-L-erythro-5,6,7,8-tetrahydrobiopterin = (6R)-L-erythro-6,7-dihydrobiopterin + H2O. The chain is Putative pterin-4-alpha-carbinolamine dehydratase from Metallosphaera sedula (strain ATCC 51363 / DSM 5348 / JCM 9185 / NBRC 15509 / TH2).